We begin with the raw amino-acid sequence, 457 residues long: Ribosomal protein uS12 methylthiotransferase RimO (457 aa).

Residues 30–140 (PTIGMVSLGC…VLDAVHGAVP (111 aa)) form the MTTase N-terminal domain. Residues C39, C75, C104, C171, C175, and C178 each coordinate [4Fe-4S] cluster. In terms of domain architecture, Radical SAM core spans 157–386 (LTPRHFSYLK…MQKAQAISEA (230 aa)). One can recognise a TRAM domain in the interval 389-456 (AARIGQRLEV…EYDLWGRAVL (68 aa)).

The protein belongs to the methylthiotransferase family. RimO subfamily. Requires [4Fe-4S] cluster as cofactor.

The protein localises to the cytoplasm. It catalyses the reaction L-aspartate(89)-[ribosomal protein uS12]-hydrogen + (sulfur carrier)-SH + AH2 + 2 S-adenosyl-L-methionine = 3-methylsulfanyl-L-aspartate(89)-[ribosomal protein uS12]-hydrogen + (sulfur carrier)-H + 5'-deoxyadenosine + L-methionine + A + S-adenosyl-L-homocysteine + 2 H(+). Functionally, catalyzes the methylthiolation of an aspartic acid residue of ribosomal protein uS12. This is Ribosomal protein uS12 methylthiotransferase RimO from Cereibacter sphaeroides (strain ATCC 17025 / ATH 2.4.3) (Rhodobacter sphaeroides).